The sequence spans 361 residues: DNA replication and repair protein RecF (361 aa).

30-37 contributes to the ATP binding site; that stretch reads GDNAQGKT.

The protein belongs to the RecF family.

It localises to the cytoplasm. In terms of biological role, the RecF protein is involved in DNA metabolism; it is required for DNA replication and normal SOS inducibility. RecF binds preferentially to single-stranded, linear DNA. It also seems to bind ATP. The sequence is that of DNA replication and repair protein RecF from Clostridium botulinum (strain Alaska E43 / Type E3).